A 179-amino-acid chain; its full sequence is Sec-independent protein translocase protein TatB (179 aa).

The helical transmembrane segment at 1 to 21 threads the bilayer; sequence MLDLGLSKMALIGVVALVVLG. The span at 101–115 shows a compositional bias: low complexity; that stretch reads GAAGDAGSVGSPGSD. The interval 101–134 is disordered; the sequence is GAAGDAGSVGSPGSDTPAAPSWRGSSAALAPKRR.

Belongs to the TatB family. As to quaternary structure, the Tat system comprises two distinct complexes: a TatABC complex, containing multiple copies of TatA, TatB and TatC subunits, and a separate TatA complex, containing only TatA subunits. Substrates initially bind to the TatABC complex, which probably triggers association of the separate TatA complex to form the active translocon.

Its subcellular location is the cell inner membrane. Its function is as follows. Part of the twin-arginine translocation (Tat) system that transports large folded proteins containing a characteristic twin-arginine motif in their signal peptide across membranes. Together with TatC, TatB is part of a receptor directly interacting with Tat signal peptides. TatB may form an oligomeric binding site that transiently accommodates folded Tat precursor proteins before their translocation. In Burkholderia orbicola (strain AU 1054), this protein is Sec-independent protein translocase protein TatB.